Consider the following 171-residue polypeptide: O-acetyl-ADP-ribose deacetylase 1 (171 aa).

One can recognise a Macro domain in the interval 1-171; sequence MKKITVIQGD…NYDLYLKLLN (171 aa). Substrate-binding positions include 10-11, Asn-24, 32-34, and 121-125; these read DI, GVD, and STGIY. Asp-34 acts as the Proton acceptor in catalysis.

This sequence belongs to the MacroD-type family. YmdB subfamily. Homodimer. Interacts with RNase III.

It carries out the reaction 3''-O-acetyl-ADP-D-ribose + H2O = ADP-D-ribose + acetate + H(+). It catalyses the reaction 2''-O-acetyl-ADP-D-ribose + H2O = ADP-D-ribose + acetate + H(+). Its function is as follows. Deacetylates O-acetyl-ADP ribose to yield ADP-ribose and free acetate. Down-regulates ribonuclease 3 (RNase III) activity. Acts by interacting directly with the region of the ribonuclease that is required for dimerization/activation. This chain is O-acetyl-ADP-ribose deacetylase 1, found in Pantoea vagans (strain C9-1) (Pantoea agglomerans (strain C9-1)).